Consider the following 1433-residue polypeptide: Probable serine/threonine-protein kinase DDB_G0277989 (1433 aa).

Residues 1–4 and lysine 41 each bind ATP; that span reads MNEI. One can recognise a Protein kinase 1 domain in the interval 1–272; sequence MNEIIVGEYK…EFDDFTHPLS (272 aa). Aspartate 151 acts as the Proton acceptor in catalysis. Low complexity-rich tracts occupy residues 332–362 and 533–550; these read NNNN…NNNN and TATT…TTTA. Disordered stretches follow at residues 332 to 366 and 521 to 550; these read NNNN…SDGP and PSSE…TTTA. One can recognise a Protein kinase 2 domain in the interval 1177–1433; sequence IYDKRYYIQK…QPHVCKSFKK (257 aa).

The protein belongs to the protein kinase superfamily. Ser/Thr protein kinase family.

It carries out the reaction L-seryl-[protein] + ATP = O-phospho-L-seryl-[protein] + ADP + H(+). The catalysed reaction is L-threonyl-[protein] + ATP = O-phospho-L-threonyl-[protein] + ADP + H(+). The chain is Probable serine/threonine-protein kinase DDB_G0277989 from Dictyostelium discoideum (Social amoeba).